The following is a 355-amino-acid chain: Methionine import ATP-binding protein MetN (355 aa).

In terms of domain architecture, ABC transporter spans 8–250 (LKNIDITFTQ…PQEDLTQEFI (243 aa)). ATP is bound at residue 42–49 (GYSGAGKS).

This sequence belongs to the ABC transporter superfamily. Methionine importer (TC 3.A.1.24) family. In terms of assembly, the complex is composed of two ATP-binding proteins (MetN), two transmembrane proteins (MetI) and a solute-binding protein (MetQ).

The protein localises to the cell membrane. It carries out the reaction L-methionine(out) + ATP + H2O = L-methionine(in) + ADP + phosphate + H(+). The catalysed reaction is D-methionine(out) + ATP + H2O = D-methionine(in) + ADP + phosphate + H(+). Functionally, part of the ABC transporter complex MetNIQ involved in methionine import. Responsible for energy coupling to the transport system. The polypeptide is Methionine import ATP-binding protein MetN (Streptococcus thermophilus (strain ATCC BAA-250 / LMG 18311)).